Consider the following 780-residue polypeptide: Aconitate hydratase, mitochondrial (780 aa).

A mitochondrion-targeting transit peptide spans M1–C27. An N6-succinyllysine modification is found at K31. K50 bears the N6-acetyllysine; alternate mark. K50 is modified (N6-succinyllysine; alternate). Position 99 (Q99) interacts with substrate. 2 positions are modified to N6-acetyllysine; alternate: K138 and K144. K138 and K144 each carry N6-succinyllysine; alternate. D192–H194 contacts substrate. K233 bears the N6-acetyllysine; alternate mark. K233 is modified (N6-succinyllysine; alternate). C385 is a binding site for [4Fe-4S] cluster. K411 is modified (N6-succinyllysine). 2 residues coordinate [4Fe-4S] cluster: C448 and C451. Residues R474 and R479 each coordinate substrate. 2 positions are modified to N6-acetyllysine; alternate: K517 and K523. 2 positions are modified to N6-succinyllysine; alternate: K517 and K523. Basic and acidic residues predominate over residues L524 to F537. The interval L524–P560 is disordered. An N6-succinyllysine modification is found at K549. The segment covering S551 to P560 has biased composition (polar residues). At S559 the chain carries Phosphoserine. K573 carries the post-translational modification N6-acetyllysine; alternate. K573 bears the N6-succinyllysine; alternate mark. 2 positions are modified to N6-succinyllysine: K577 and K591. K605 is subject to N6-acetyllysine; alternate. K605 bears the N6-succinyllysine; alternate mark. R607 lines the substrate pocket. The residue at position 628 (K628) is an N6-succinyllysine. A Phosphoserine modification is found at S670. Residue S670 to R671 coordinates substrate. N6-succinyllysine is present on K689. N6-acetyllysine; alternate is present on residues K723 and K730. K723 and K730 each carry N6-succinyllysine; alternate. N6-acetyllysine occurs at positions 736, 739, and 743.

The protein belongs to the aconitase/IPM isomerase family. In terms of assembly, monomer. Requires [4Fe-4S] cluster as cofactor. Post-translationally, forms covalent cross-links mediated by transglutaminase TGM2, between a glutamine and the epsilon-amino group of a lysine residue, forming homopolymers and heteropolymers.

It localises to the mitochondrion. The enzyme catalyses citrate = D-threo-isocitrate. It functions in the pathway carbohydrate metabolism; tricarboxylic acid cycle; isocitrate from oxaloacetate: step 2/2. Functionally, catalyzes the isomerization of citrate to isocitrate via cis-aconitate. In Mus musculus (Mouse), this protein is Aconitate hydratase, mitochondrial (Aco2).